A 374-amino-acid chain; its full sequence is F-box/LRR-repeat protein 8 (374 aa).

An F-box domain is found at 2–48 (AEPGEGLPEEVLALIFRHLSLRDRAAAARVCRAWAAAATCSAVWHDT).

Directly interacts with SKP1 and CUL1.

Substrate-recognition component of the SCF (SKP1-CUL1-F-box protein)-type E3 ubiquitin ligase complex. The polypeptide is F-box/LRR-repeat protein 8 (FBXL8) (Homo sapiens (Human)).